We begin with the raw amino-acid sequence, 1134 residues long: Mediator of RNA polymerase II transcription subunit 12 (1134 aa).

It belongs to the Mediator complex subunit 12 family. As to quaternary structure, component of the srb8-11 complex which consists of rb8, srb9(TRAP240), srb10 and srb11. The srb8-11 complex associates with the Mediator complex thereby blocking association with RNA polymerase II and leading to reduced transcriptional activation by Mediator.

Its subcellular location is the nucleus. Functionally, component of the srb8-11 complex. The srb8-11 complex is a regulatory module of the Mediator complex which is itself involved in regulation of basal and activated RNA polymerase II-dependent transcription. The srb8-11 complex may be involved in the transcriptional repression of a subset of genes regulated by Mediator. It may inhibit the association of the Mediator complex with RNA polymerase II to form the holoenzyme complex. The protein is Mediator of RNA polymerase II transcription subunit 12 (srb8) of Schizosaccharomyces pombe (strain 972 / ATCC 24843) (Fission yeast).